The following is a 67-amino-acid chain: Protein AaeX (67 aa).

The next 2 membrane-spanning stretches (helical) occupy residues 10–30 (FGLS…LFFV) and 43–63 (FVWH…YLLF).

It belongs to the AaeX family.

The protein resides in the cell membrane. This chain is Protein AaeX, found in Pectobacterium carotovorum subsp. carotovorum (strain PC1).